The primary structure comprises 512 residues: 2,3-bisphosphoglycerate-independent phosphoglycerate mutase (512 aa).

2 residues coordinate Mn(2+): Asp-13 and Ser-63. Ser-63 acts as the Phosphoserine intermediate in catalysis. Substrate-binding positions include His-124, 154 to 155 (RD), Arg-186, Arg-192, 262 to 265 (RPDR), and Lys-337. Positions 404, 408, 445, 446, and 463 each coordinate Mn(2+).

Belongs to the BPG-independent phosphoglycerate mutase family. In terms of assembly, monomer. Mn(2+) serves as cofactor.

The enzyme catalyses (2R)-2-phosphoglycerate = (2R)-3-phosphoglycerate. The protein operates within carbohydrate degradation; glycolysis; pyruvate from D-glyceraldehyde 3-phosphate: step 3/5. Functionally, essential for rapid growth and for sporulation. Catalyzes the interconversion of 2-phosphoglycerate and 3-phosphoglycerate. The chain is 2,3-bisphosphoglycerate-independent phosphoglycerate mutase from Oceanobacillus iheyensis (strain DSM 14371 / CIP 107618 / JCM 11309 / KCTC 3954 / HTE831).